The following is an 887-amino-acid chain: Oxysterol-binding protein-related protein 3 (887 aa).

Positions Met1–Trp35 are disordered. Ser16 and Ser34 each carry phosphoserine. Low complexity predominate over residues Ser16–Gln32. The PH domain maps to Pro51 to Met146. The FFAT 1 signature appears at His161–Thr167. Residues Ser200, Ser251, and Ser265 each carry the phosphoserine modification. Residues Gly261 to Ser326 are disordered. Over residues Lys268–Ala280 the composition is skewed to basic residues. Phosphoserine is present on residues Ser304, Ser309, Ser320, Ser323, Ser371, Ser372, Ser410, Ser425, Ser437, and Ser440. An FFAT 2 motif is present at residues Glu450–Ala454.

The protein belongs to the OSBP family. As to quaternary structure, homodimer. Interacts with RRAS. Interacts (phosphorylated form) with VAPA. Interacts with OSBPL6. Post-translationally, phosphorylation is enhanced in vitro by phorbol-12-myristate-13-acetate (PMA), forskolin and calcium ionophore A23187. Phosphorylation seems to be stimulated in conditions of low cell-cell (or cell-matrix) adhesion. In terms of tissue distribution, expressed in a subset of small lymphocytes (at protein level). Expressed at high concentration in kidney, lymph node and thymus. Expressed at moderate concentration in stomach, jejunum, ileum, appendix, spleen, leukocytes, trachea, lung and thyroid gland. Expressed at low concentration in whole brain, esophagus, duodenum, ileocecum, colon, skeletal muscle, bone marrow, placenta and mammary gland. Isoform 1a, isoform 1b, isoform 1c and isoform 1d are highly expressed in brain, bone marrow, colon, kidney, lung, skeletal muscle, spleen, thymus and thyroid. Not expressed in heart and liver. Isoform 2a, isoform 2b, isoform 2c and isoform 2d are expressed in brain, bone marrow, kidney, skeletal muscle, spleen, thymus and thyroid. Not expressed in heart, liver and lung.

It is found in the endoplasmic reticulum membrane. The protein resides in the cytoplasm. It localises to the cytosol. Its subcellular location is the cell membrane. The protein localises to the cell projection. It is found in the filopodium tip. The protein resides in the nucleus membrane. Functionally, phosphoinositide-binding protein which associates with both cell and endoplasmic reticulum (ER) membranes. Can bind to the ER membrane protein VAPA and recruit VAPA to plasma membrane sites, thus linking these intracellular compartments. The ORP3-VAPA complex stimulates RRAS signaling which in turn attenuates integrin beta-1 (ITGB1) activation at the cell surface. With VAPA, may regulate ER morphology. Has a role in regulation of the actin cytoskeleton, cell polarity and cell adhesion. Binds to phosphoinositides with preference for PI(3,4)P2 and PI(3,4,5)P3. Also binds 25-hydroxycholesterol and cholesterol. This is Oxysterol-binding protein-related protein 3 (OSBPL3) from Homo sapiens (Human).